The primary structure comprises 432 residues: Enolase (432 aa).

Gln-167 contributes to the (2R)-2-phosphoglycerate binding site. The active-site Proton donor is the Glu-209. Asp-246, Glu-291, and Asp-318 together coordinate Mg(2+). (2R)-2-phosphoglycerate is bound by residues Lys-343, Arg-372, Ser-373, and Lys-394. Lys-343 functions as the Proton acceptor in the catalytic mechanism.

Belongs to the enolase family. As to quaternary structure, component of the RNA degradosome, a multiprotein complex involved in RNA processing and mRNA degradation. Requires Mg(2+) as cofactor.

It is found in the cytoplasm. The protein localises to the secreted. Its subcellular location is the cell surface. The catalysed reaction is (2R)-2-phosphoglycerate = phosphoenolpyruvate + H2O. It functions in the pathway carbohydrate degradation; glycolysis; pyruvate from D-glyceraldehyde 3-phosphate: step 4/5. Catalyzes the reversible conversion of 2-phosphoglycerate (2-PG) into phosphoenolpyruvate (PEP). It is essential for the degradation of carbohydrates via glycolysis. The polypeptide is Enolase (Colwellia psychrerythraea (strain 34H / ATCC BAA-681) (Vibrio psychroerythus)).